The primary structure comprises 554 residues: 2-succinyl-5-enolpyruvyl-6-hydroxy-3-cyclohexene-1-carboxylate synthase (554 aa).

The protein belongs to the TPP enzyme family. MenD subfamily. As to quaternary structure, homodimer. Requires Mg(2+) as cofactor. Mn(2+) is required as a cofactor. The cofactor is thiamine diphosphate.

The enzyme catalyses isochorismate + 2-oxoglutarate + H(+) = 5-enolpyruvoyl-6-hydroxy-2-succinyl-cyclohex-3-ene-1-carboxylate + CO2. Its pathway is quinol/quinone metabolism; 1,4-dihydroxy-2-naphthoate biosynthesis; 1,4-dihydroxy-2-naphthoate from chorismate: step 2/7. The protein operates within quinol/quinone metabolism; menaquinone biosynthesis. Functionally, catalyzes the thiamine diphosphate-dependent decarboxylation of 2-oxoglutarate and the subsequent addition of the resulting succinic semialdehyde-thiamine pyrophosphate anion to isochorismate to yield 2-succinyl-5-enolpyruvyl-6-hydroxy-3-cyclohexene-1-carboxylate (SEPHCHC). The polypeptide is 2-succinyl-5-enolpyruvyl-6-hydroxy-3-cyclohexene-1-carboxylate synthase (Flavobacterium johnsoniae (strain ATCC 17061 / DSM 2064 / JCM 8514 / BCRC 14874 / CCUG 350202 / NBRC 14942 / NCIMB 11054 / UW101) (Cytophaga johnsonae)).